The chain runs to 1481 residues: MQRSPLEKASVVSKLFFSWTRPVLKKGYRQRLELSDIYQIPSADSADNLSEKLEREWDRELASKKNPKLINALRRCFFWRFTFYGILLYLGEVTKAVQPLLLGRIIASYDPDNKTERSIAIYLGIGLCLLFIVRTLLLHPAIFGLHHIGMQMRIAMFSLIYKKTLKLSSRVLDKISIGQLVSLLSNNLNKFDEGLALAHFVWIAPLQVALLMGLIWELLQASAFCGLGFLIVLALFQAGLGRMMMKYRDQRAGKINERLVITSEMIENIQSVKAYCWEEAMEKMIENLRQTELKLTRKAAYVRYFNSSAFFFSGFFVVFLSVLPYALIKGIALRKIFTTISFCIVLRMAVTRQFPWAVQTWYDSLGAINKIQDFLQKQEYKTLEYNLTTTEVVMENVTAFWEEGFGELFEKVKQNNNNRKTSNGDDNLFFSNFSLLGTPVLKDINFKIERGQLLAVAGSTGAGKTSLLMMIMGELEPSEGKIKHSGRISFCSQFSWIMPGTIKENIIFGVSYDEYRYRSVIKACQLEEDISKFAEKDNIVLGEGGITLSGGQRARISLARAVYKDADLYLLDSPFGYLDVLTEKEIFESCVCKLMANKTRILVTSKMEHLKKADKILILHEGSSYFYGTFSELQNLRPDFSSKLMGYDSFDQFSSERRNSILTETLRRFSLEGDAPVSWTETKKQSFKQTGEFGEKRKNSILNSINSIRKFSIVQKTPLQMNGIEEDSDEPLERRLSLIPDSEQGEAILPRISVINTGPALQVRRRQSVLNMMTHSVNQGQSGHRKTTASTRKMSLAPQANLTELDIYSRRLSQETGLEISEEINEEDLKECFFDDMESIPAVTTWNTYLRYITLHKSLIFVLIWCLVIFLAEVAASLVLLWLLGNTRFQDKGNSTYSRNNSYAVIITNTSSYYVFYIYVGVADTLLALGFFRGLPLVHTLITVSKILHHKMLHSVLQAPMSTLNTLKAGGILNRFSKDIAILDDLLPLTIFDFIQLLLIVIGAIAVVSVLQPYIFLATVPVIAAFILLRAYFLQTSQQLKQLESAGRSPIFTHLVTSLKGLWTLRAFGRQPYFETLFHKALNLHTASWFLYLSTLRWFQMRIEMIFVIFFIAVTFISILTTGEGEGTVGIILTLAMNIMSTLQWAVNSSIDVDSLMRSVSRVFKFIDMPTEEGKPTKSTKAYKNGQLSKVMIIENSHVKKDDIWPSGGQMTIKDLTAKYVEGGNAILENISFSISPGQRVGLLGRTGSGKSTLLSAFLRLLNTEGEIQIDGVSWDSITLQQWRKAFGVIPQKVFIFTGTFRKNLDPYEQWSDQEIWKVADEVGLRSVIEQFPGKLDFVLVDGGCVLSHGHKQLMCLARSVLSKAKILLLDEPSAHLDPVTYQIIRRALKQAFADCTVILCEHRIEAMLECQQFLVIEENKVRQYDSIQKLLNEKSLFRQAISHSDRMKLFPHRNSSKYKSRPQIASLKEETEEEVQETRL.

Residues 1-77 (MQRSPLEKAS…KLINALRRCF (77 aa)) lie on the Cytoplasmic side of the membrane. The helical transmembrane segment at 78–98 (FWRFTFYGILLYLGEVTKAVQ) threads the bilayer. An ABC transmembrane type-1 1 domain is found at 81–365 (FTFYGILLYL…WAVQTWYDSL (285 aa)). Residues 99–122 (PLLLGRIIASYDPDNKTERSIAIY) lie on the Extracellular side of the membrane. The chain crosses the membrane as a helical span at residues 123–146 (LGIGLCLLFIVRTLLLHPAIFGLH). Residues 147-195 (HIGMQMRIAMFSLIYKKTLKLSSRVLDKISIGQLVSLLSNNLNKFDEGL) lie on the Cytoplasmic side of the membrane. Residues 196–216 (ALAHFVWIAPLQVALLMGLIW) form a helical membrane-spanning segment. Residues 217–222 (ELLQAS) are Extracellular-facing. A helical membrane pass occupies residues 223-243 (AFCGLGFLIVLALFQAGLGRM). Residues 244–298 (MMKYRDQRAGKINERLVITSEMIENIQSVKAYCWEEAMEKMIENLRQTELKLTRK) lie on the Cytoplasmic side of the membrane. The helical transmembrane segment at 299–319 (AAYVRYFNSSAFFFSGFFVVF) threads the bilayer. The Extracellular segment spans residues 320–339 (LSVLPYALIKGIALRKIFTT). Residues 340–358 (ISFCIVLRMAVTRQFPWAV) form a helical membrane-spanning segment. Topologically, residues 359–858 (QTWYDSLGAI…YLRYITLHKS (500 aa)) are cytoplasmic. Residues Trp401, Ser434, 458–465 (GSTGAGKT), and Gln493 contribute to the ATP site. Residues 423–646 (NGDDNLFFSN…RPDFSSKLMG (224 aa)) form the ABC transporter 1 domain. Cys524 carries the S-palmitoyl cysteine lipid modification. A phosphoserine mark is found at Ser549 and Ser660. Residues 654-831 (SSERRNSILT…EEINEEDLKE (178 aa)) form a disordered R region region. Phosphoserine; by PKA is present on Ser670. Residue Ser686 is modified to Phosphoserine. A Glycyl lysine isopeptide (Lys-Gly) (interchain with G-Cter in ubiquitin) cross-link involves residue Lys688. Ser700 and Ser712 each carry phosphoserine. Thr717 is subject to Phosphothreonine. 6 positions are modified to phosphoserine: Ser737, Ser753, Ser768, Ser790, Ser795, and Ser813. Residues 859-879 (LIFVLIWCLVIFLAEVAASLV) form a helical membrane-spanning segment. The region spanning 859–1155 (LIFVLIWCLV…AVNSSIDVDS (297 aa)) is the ABC transmembrane type-1 2 domain. Residues 880–918 (LLWLLGNTRFQDKGNSTYSRNNSYAVIITNTSSYYVFYI) lie on the Extracellular side of the membrane. N-linked (GlcNAc...) asparagine glycosylation is found at Asn894, Asn900, and Asn909. A discontinuously helical membrane pass occupies residues 919-939 (YVGVADTLLALGFFRGLPLVH). Residues 940–990 (TLITVSKILHHKMLHSVLQAPMSTLNTLKAGGILNRFSKDIAILDDLLPLT) are Cytoplasmic-facing. The helical transmembrane segment at 991–1011 (IFDFIQLLLIVIGAIAVVSVL) threads the bilayer. Residues 1012 to 1013 (QP) lie on the Extracellular side of the membrane. Residues 1014–1034 (YIFLATVPVIAAFILLRAYFL) traverse the membrane as a helical segment. Over 1035 to 1095 (QTSQQLKQLE…TASWFLYLST (61 aa)) the chain is Cytoplasmic. Residues 1096 to 1116 (LRWFQMRIEMIFVIFFIAVTF) traverse the membrane as a helical segment. The Extracellular portion of the chain corresponds to 1117-1130 (ISILTTGEGEGTVG). Residues 1131–1151 (IILTLAMNIMSTLQWAVNSSI) form a helical membrane-spanning segment. At 1152 to 1481 (DVDSLMRSVS…TEEEVQETRL (330 aa)) the chain is on the cytoplasmic side. In terms of domain architecture, ABC transporter 2 spans 1211-1444 (MTIKDLTAKY…KSLFRQAISH (234 aa)). ATP-binding positions include Tyr1220 and 1245–1252 (GRTGSGKS). The interaction with GORASP2 stretch occupies residues 1387-1481 (RALKQAFADC…TEEEVQETRL (95 aa)). The S-palmitoyl cysteine moiety is linked to residue Cys1396. Ser1445 and Ser1457 each carry phosphoserine. Residues 1453-1481 (HRNSSKYKSRPQIASLKEETEEEVQETRL) form a disordered region. Over residues 1471-1481 (ETEEEVQETRL) the composition is skewed to acidic residues. Residues 1479-1481 (TRL) carry the PDZ-binding motif.

The protein belongs to the ABC transporter superfamily. ABCC family. CFTR transporter (TC 3.A.1.202) subfamily. In terms of assembly, monomer; does not require oligomerization for channel activity. May form oligomers in the membrane. Interacts with SLC26A3, SLC26A6 and NHERF1. Interacts with SHANK2. Interacts with MYO6. Interacts (via C-terminus) with GOPC (via PDZ domain); this promotes CFTR internalization and thereby decreases channel activity. Interacts with SLC4A7 through NHERF1. Found in a complex with MYO5B and RAB11A. Interacts with ANO1. Interacts with SLC26A8. Interacts with AHCYL1; the interaction increases CFTR activity. Interacts with CSE1L. The core-glycosylated form interacts with GORASP2 (via PDZ GRASP-type 1 domain) in respone to ER stress. Interacts with MARCHF2; the interaction leads to CFTR ubiqtuitination and degradation. Interacts with ADGRG2. Post-translationally, N-glycosylated. Phosphorylated; cAMP treatment promotes phosphorylation and activates the channel. Dephosphorylation decreases the ATPase activity (in vitro). Phosphorylation at PKA sites activates the channel. Phosphorylation at PKC sites enhances the response to phosphorylation by PKA. Phosphorylated by AMPK; this inhibits channel activity. In terms of processing, ubiquitinated, leading to its degradation in the lysosome. Deubiquitination by USP10 in early endosomes enhances its endocytic recycling to the cell membrane. Ubiquitinated by RNF185 during ER stress. Ubiquitinated by MARCHF2.

The protein resides in the apical cell membrane. The protein localises to the early endosome membrane. It localises to the cell membrane. It is found in the recycling endosome membrane. Its subcellular location is the endoplasmic reticulum membrane. The protein resides in the nucleus. The enzyme catalyses ATP + H2O + closed Cl(-) channel = ADP + phosphate + open Cl(-) channel.. It carries out the reaction chloride(in) = chloride(out). The catalysed reaction is hydrogencarbonate(in) = hydrogencarbonate(out). It catalyses the reaction ATP + H2O = ADP + phosphate + H(+). In terms of biological role, epithelial ion channel that plays an important role in the regulation of epithelial ion and water transport and fluid homeostasis. Mediates the transport of chloride ions across the cell membrane. Possesses an intrinsic ATPase activity and utilizes ATP to gate its channel; the passive flow of anions through the channel is gated by cycles of ATP binding and hydrolysis by the ATP-binding domains. The ion channel is also permeable to HCO(3)(-); selectivity depends on the extracellular chloride concentration. Exerts its function also by modulating the activity of other ion channels and transporters. Contributes to the regulation of the pH and the ion content of the epithelial fluid layer. Modulates the activity of the epithelial sodium channel (ENaC) complex, in part by regulating the cell surface expression of the ENaC complex. May regulate bicarbonate secretion and salvage in epithelial cells by regulating the transporter SLC4A7. Can inhibit the chloride channel activity of ANO1. Plays a role in the chloride and bicarbonate homeostasis during sperm epididymal maturation and capacitation. This chain is Cystic fibrosis transmembrane conductance regulator, found in Saimiri boliviensis boliviensis (Bolivian squirrel monkey).